The following is a 146-amino-acid chain: Hut operon positive regulatory protein (146 aa).

This sequence belongs to the HutP family. Homohexamer.

Antiterminator that binds to cis-acting regulatory sequences on the mRNA in the presence of histidine, thereby suppressing transcription termination and activating the hut operon for histidine utilization. The protein is Hut operon positive regulatory protein of Bacillus cereus (strain G9842).